Consider the following 273-residue polypeptide: Undecaprenyl-diphosphatase (273 aa).

The next 7 membrane-spanning stretches (helical) occupy residues 45 to 65 (AKTF…VMFW), 90 to 110 (LTLI…LIFH), 116 to 136 (LFNP…LIAA), 154 to 173 (YRQA…PGFS), 190 to 210 (YAAS…ATAL), 222 to 242 (ADFP…LVAI), and 252 to 272 (ISFI…YVVF).

Belongs to the UppP family.

The protein resides in the cell inner membrane. The catalysed reaction is di-trans,octa-cis-undecaprenyl diphosphate + H2O = di-trans,octa-cis-undecaprenyl phosphate + phosphate + H(+). In terms of biological role, catalyzes the dephosphorylation of undecaprenyl diphosphate (UPP). Confers resistance to bacitracin. The polypeptide is Undecaprenyl-diphosphatase (Enterobacter sp. (strain 638)).